Consider the following 194-residue polypeptide: Ribonuclease VapC1 (194 aa).

One can recognise a PINc domain in the interval 34–134; it reads YVIDTSAIIS…TDDYSIQNVA (101 aa). Mg(2+) contacts are provided by Asp-37 and Asp-150.

The protein belongs to the PINc/VapC protein family. Mg(2+) serves as cofactor.

Its function is as follows. Toxic component of a type II toxin-antitoxin (TA) system. An RNase. This Thermoplasma acidophilum (strain ATCC 25905 / DSM 1728 / JCM 9062 / NBRC 15155 / AMRC-C165) protein is Ribonuclease VapC1.